The chain runs to 552 residues: HTH-type transcriptional regulator SgrR (552 aa).

Residues Met-1–Arg-116 form the HTH marR-type domain. The H-T-H motif DNA-binding region spans Leu-26–Asp-49. The interval Glu-163 to Trp-492 is solute-binding.

Functionally, activates the small RNA gene sgrS under glucose-phosphate stress conditions as well as yfdZ. Represses its own transcription under both stress and non-stress conditions. Might act as a sensor of the intracellular accumulation of phosphoglucose by binding these molecules in its C-terminal solute-binding domain. This Shigella dysenteriae serotype 1 (strain Sd197) protein is HTH-type transcriptional regulator SgrR.